The primary structure comprises 341 residues: tRNA N6-adenosine threonylcarbamoyltransferase (341 aa).

H115 and H119 together coordinate Fe cation. Substrate is bound by residues 137–141 (IVSGG), D170, G183, D187, and N276. D304 is a Fe cation binding site.

Belongs to the KAE1 / TsaD family. Fe(2+) is required as a cofactor.

The protein resides in the cytoplasm. The enzyme catalyses L-threonylcarbamoyladenylate + adenosine(37) in tRNA = N(6)-L-threonylcarbamoyladenosine(37) in tRNA + AMP + H(+). Functionally, required for the formation of a threonylcarbamoyl group on adenosine at position 37 (t(6)A37) in tRNAs that read codons beginning with adenine. Is involved in the transfer of the threonylcarbamoyl moiety of threonylcarbamoyl-AMP (TC-AMP) to the N6 group of A37, together with TsaE and TsaB. TsaD likely plays a direct catalytic role in this reaction. The polypeptide is tRNA N6-adenosine threonylcarbamoyltransferase (Staphylococcus aureus (strain bovine RF122 / ET3-1)).